The following is a 237-amino-acid chain: Concanavalin-Br (237 aa).

Glutamate 8 and aspartate 10 together coordinate Mn(2+). Ca(2+)-binding residues include aspartate 10, tyrosine 12, asparagine 14, and aspartate 19. Tyrosine 12 contacts a carbohydrate. Aspartate 19, histidine 24, and serine 34 together coordinate Mn(2+). Residue 99-100 (LY) coordinates a carbohydrate. Residue aspartate 208 coordinates Ca(2+). Arginine 228 is an a carbohydrate binding site.

It belongs to the leguminous lectin family. In terms of assembly, homotetramer.

Its function is as follows. Glucose/D-mannose specific lectin. Has anti-inflammatory activity in rats. Induces histamine release in mast cells from hamster and rat. Induces lymphocyte proliferation and IFNG production. Shows toxicity against the aquatic snail B.glabrata at concentrations higher than 20 ug/ml. This chain is Concanavalin-Br, found in Canavalia brasiliensis (Brazilian jack bean).